An 860-amino-acid chain; its full sequence is Leucine--tRNA ligase (860 aa).

The 'HIGH' region motif lies at 42 to 52 (PYPSGRLHMGH). The 'KMSKS' region motif lies at 619-623 (KMSKS). Lys622 contributes to the ATP binding site.

It belongs to the class-I aminoacyl-tRNA synthetase family.

It is found in the cytoplasm. It carries out the reaction tRNA(Leu) + L-leucine + ATP = L-leucyl-tRNA(Leu) + AMP + diphosphate. The sequence is that of Leucine--tRNA ligase from Photorhabdus laumondii subsp. laumondii (strain DSM 15139 / CIP 105565 / TT01) (Photorhabdus luminescens subsp. laumondii).